The following is a 556-amino-acid chain: 2-succinyl-5-enolpyruvyl-6-hydroxy-3-cyclohexene-1-carboxylate synthase (556 aa).

This sequence belongs to the TPP enzyme family. MenD subfamily. As to quaternary structure, homodimer. Mg(2+) is required as a cofactor. It depends on Mn(2+) as a cofactor. The cofactor is thiamine diphosphate.

It catalyses the reaction isochorismate + 2-oxoglutarate + H(+) = 5-enolpyruvoyl-6-hydroxy-2-succinyl-cyclohex-3-ene-1-carboxylate + CO2. It functions in the pathway quinol/quinone metabolism; 1,4-dihydroxy-2-naphthoate biosynthesis; 1,4-dihydroxy-2-naphthoate from chorismate: step 2/7. The protein operates within quinol/quinone metabolism; menaquinone biosynthesis. Functionally, catalyzes the thiamine diphosphate-dependent decarboxylation of 2-oxoglutarate and the subsequent addition of the resulting succinic semialdehyde-thiamine pyrophosphate anion to isochorismate to yield 2-succinyl-5-enolpyruvyl-6-hydroxy-3-cyclohexene-1-carboxylate (SEPHCHC). The protein is 2-succinyl-5-enolpyruvyl-6-hydroxy-3-cyclohexene-1-carboxylate synthase of Escherichia fergusonii (strain ATCC 35469 / DSM 13698 / CCUG 18766 / IAM 14443 / JCM 21226 / LMG 7866 / NBRC 102419 / NCTC 12128 / CDC 0568-73).